The primary structure comprises 878 residues: Alanine--tRNA ligase (878 aa).

Residues His566, His570, Cys668, and His672 each contribute to the Zn(2+) site.

The protein belongs to the class-II aminoacyl-tRNA synthetase family. Requires Zn(2+) as cofactor.

It is found in the cytoplasm. It carries out the reaction tRNA(Ala) + L-alanine + ATP = L-alanyl-tRNA(Ala) + AMP + diphosphate. Functionally, catalyzes the attachment of alanine to tRNA(Ala) in a two-step reaction: alanine is first activated by ATP to form Ala-AMP and then transferred to the acceptor end of tRNA(Ala). Also edits incorrectly charged Ser-tRNA(Ala) and Gly-tRNA(Ala) via its editing domain. This is Alanine--tRNA ligase from Geobacillus thermodenitrificans (strain NG80-2).